A 122-amino-acid polypeptide reads, in one-letter code: Large ribosomal subunit protein uL14 (122 aa).

This sequence belongs to the universal ribosomal protein uL14 family. In terms of assembly, part of the 50S ribosomal subunit. Forms a cluster with proteins L3 and L19. In the 70S ribosome, L14 and L19 interact and together make contacts with the 16S rRNA in bridges B5 and B8.

Binds to 23S rRNA. Forms part of two intersubunit bridges in the 70S ribosome. This is Large ribosomal subunit protein uL14 from Sinorhizobium fredii (strain NBRC 101917 / NGR234).